Consider the following 1113-residue polypeptide: Carbamoyl phosphate synthase arginine-specific large chain (1113 aa).

The carboxyphosphate synthetic domain stretch occupies residues 23 to 420 (QLIKGIDSVL…AFQKAFRQVD (398 aa)). Residues Arg-150, Arg-190, Gly-196, Gly-197, Lys-227, Leu-229, Glu-234, Gly-260, Ile-261, His-262, Gln-303, and Glu-317 each coordinate ATP. The ATP-grasp 1 domain maps to 154 to 346 (ARALKEINMP…LAYTAAKIAL (193 aa)). The Mg(2+) site is built by Gln-303, Glu-317, and Asn-319. Mn(2+)-binding residues include Gln-303, Glu-317, and Asn-319. The interval 421–568 (PSLLGFQGSD…YVTYNAVKDD (148 aa)) is oligomerization domain. Residues 569 to 955 (VTFGDNGIMV…SYWVALQGLM (387 aa)) are carbamoyl phosphate synthetic domain. The 196-residue stretch at 693–888 (STILDTLGLD…FVEIAVKAFL (196 aa)) folds into the ATP-grasp 2 domain. ATP contacts are provided by Arg-729, Lys-768, Ile-770, Glu-775, Gly-800, Val-801, His-802, Ser-803, Gln-843, and Glu-859. Mg(2+)-binding residues include Gln-843, Glu-859, and Asn-861. Residues Gln-843, Glu-859, and Asn-861 each coordinate Mn(2+). The interval 956–1097 (SFCVPLPPSG…EMRQSDGPET (142 aa)) is allosteric domain. The MGS-like domain occupies 957–1113 (FCVPLPPSGI…WREYLGFKPT (157 aa)).

This sequence belongs to the CarB family. Heterodimer composed of 2 chains; the small (or glutamine) chain promotes the hydrolysis of glutamine to ammonia, which is used by the large (or ammonia) chain to synthesize carbamoyl phosphate. Requires Mg(2+) as cofactor. Mn(2+) serves as cofactor.

Its subcellular location is the cytoplasm. It catalyses the reaction hydrogencarbonate + L-glutamine + 2 ATP + H2O = carbamoyl phosphate + L-glutamate + 2 ADP + phosphate + 2 H(+). The catalysed reaction is hydrogencarbonate + NH4(+) + 2 ATP = carbamoyl phosphate + 2 ADP + phosphate + 2 H(+). The protein operates within amino-acid biosynthesis; L-arginine biosynthesis; carbamoyl phosphate from bicarbonate: step 1/1. Functionally, large subunit of the arginine-specific carbamoyl phosphate synthase (CPSase). CPSase catalyzes the formation of carbamoyl phosphate from the ammonia moiety of glutamine, hydrogencarbonate, and phosphate donated by ATP, constituting the first step of 2 biosynthetic pathways, one leading to arginine and/or urea and the other to pyrimidine nucleotides. The large subunit (synthetase) binds the substrates ammonia (free or transferred from glutamine from the small subunit), hydrogencarbonate and ATP and carries out an ATP-coupled ligase reaction, activating hydrogencarbonate by forming carboxy phosphate which reacts with ammonia to form carbamoyl phosphate. The chain is Carbamoyl phosphate synthase arginine-specific large chain (CPA2) from Eremothecium gossypii (strain ATCC 10895 / CBS 109.51 / FGSC 9923 / NRRL Y-1056) (Yeast).